Consider the following 254-residue polypeptide: 5'-methylthioadenosine/S-adenosylhomocysteine nucleosidase (254 aa).

Met1 bears the N-acetylmethionine mark. The active-site Proton acceptor is the Glu25. Residues Thr103 and 186-189 each bind S-methyl-5'-thioadenosine; that span reads KDME. Residues Lys186 and Asp212 each coordinate adenine. The Proton donor role is filled by Asp212.

This sequence belongs to the PNP/UDP phosphorylase family. MtnN subfamily. In terms of assembly, homodimer.

It carries out the reaction S-methyl-5'-thioadenosine + H2O = 5-(methylsulfanyl)-D-ribose + adenine. The catalysed reaction is S-adenosyl-L-homocysteine + H2O = S-(5-deoxy-D-ribos-5-yl)-L-homocysteine + adenine. It catalyses the reaction 5'-deoxyadenosine + H2O = 5-deoxy-D-ribose + adenine. It participates in amino-acid biosynthesis; L-methionine biosynthesis via salvage pathway; S-methyl-5-thio-alpha-D-ribose 1-phosphate from S-methyl-5'-thioadenosine (hydrolase route): step 1/2. Functionally, enzyme of the methionine cycle that catalyzes the irreversible cleavage of the glycosidic bond in 5'-methylthioadenosine (MTA) and S-adenosylhomocysteine (SAH/AdoHcy) to a lesser extent, to adenine and the corresponding thioribose, 5'-methylthioribose and S-ribosylhomocysteine, respectively. Contributes to the maintenance of AdoMet homeostasis and is required to sustain high rates of ethylene synthesis. The polypeptide is 5'-methylthioadenosine/S-adenosylhomocysteine nucleosidase (MTN2) (Arabidopsis thaliana (Mouse-ear cress)).